A 388-amino-acid polypeptide reads, in one-letter code: LL-diaminopimelate aminotransferase (388 aa).

Residues tyrosine 15 and glycine 40 each coordinate substrate. Pyridoxal 5'-phosphate contacts are provided by residues tyrosine 69, serine 103 to lysine 104, tyrosine 128, asparagine 178, tyrosine 209, and serine 237 to serine 239. Positions 104, 128, and 178 each coordinate substrate. Lysine 240 bears the N6-(pyridoxal phosphate)lysine mark. Residue arginine 248 participates in pyridoxal 5'-phosphate binding. Arginine 366 is a binding site for substrate.

This sequence belongs to the class-I pyridoxal-phosphate-dependent aminotransferase family. LL-diaminopimelate aminotransferase subfamily. As to quaternary structure, homodimer. Pyridoxal 5'-phosphate is required as a cofactor.

The enzyme catalyses (2S,6S)-2,6-diaminopimelate + 2-oxoglutarate = (S)-2,3,4,5-tetrahydrodipicolinate + L-glutamate + H2O + H(+). It functions in the pathway amino-acid biosynthesis; L-lysine biosynthesis via DAP pathway; LL-2,6-diaminopimelate from (S)-tetrahydrodipicolinate (aminotransferase route): step 1/1. In terms of biological role, involved in the synthesis of meso-diaminopimelate (m-DAP or DL-DAP), required for both lysine and peptidoglycan biosynthesis. Catalyzes the direct conversion of tetrahydrodipicolinate to LL-diaminopimelate. Can also use m-DAP instead of LL-DAP as the amino-group donor. This Syntrophobacter fumaroxidans (strain DSM 10017 / MPOB) protein is LL-diaminopimelate aminotransferase.